Here is a 241-residue protein sequence, read N- to C-terminus: Uridylate kinase (241 aa).

12–15 (KISG) provides a ligand contact to ATP. Residues 20–25 (GDKGNG) are involved in allosteric activation by GTP. Gly54 contacts UMP. Gly55 and Arg59 together coordinate ATP. UMP is bound by residues Asp74 and 135–142 (TGNPYFST). Residues Asn163, Tyr169, and Asp172 each coordinate ATP.

It belongs to the UMP kinase family. Homohexamer.

The protein localises to the cytoplasm. It catalyses the reaction UMP + ATP = UDP + ADP. It participates in pyrimidine metabolism; CTP biosynthesis via de novo pathway; UDP from UMP (UMPK route): step 1/1. Allosterically activated by GTP. Inhibited by UTP. In terms of biological role, catalyzes the reversible phosphorylation of UMP to UDP. The polypeptide is Uridylate kinase (Lactobacillus helveticus (strain DPC 4571)).